We begin with the raw amino-acid sequence, 332 residues long: D-alanine--D-alanine ligase (332 aa).

The ATP-grasp domain occupies 112–312; that stretch reads KRIWRADGLP…YPDLCLRILA (201 aa). 138–193 serves as a coordination point for ATP; that stretch reads FQELGAPMIVKPSREGSTIGLTKVTSLGQCEQAYRLAAQHDPEVLCEQFIDGDETT. Mg(2+)-binding residues include aspartate 265, glutamate 279, and asparagine 281.

This sequence belongs to the D-alanine--D-alanine ligase family. It depends on Mg(2+) as a cofactor. Requires Mn(2+) as cofactor.

It is found in the cytoplasm. It carries out the reaction 2 D-alanine + ATP = D-alanyl-D-alanine + ADP + phosphate + H(+). Its pathway is cell wall biogenesis; peptidoglycan biosynthesis. Functionally, cell wall formation. The sequence is that of D-alanine--D-alanine ligase from Acidovorax ebreus (strain TPSY) (Diaphorobacter sp. (strain TPSY)).